The following is a 474-amino-acid chain: Cysteine--tRNA ligase (474 aa).

Cysteine 28 contributes to the Zn(2+) binding site. The short motif at 30–40 is the 'HIGH' region element; the sequence is ITVYDLCHLGH. Cysteine 209, histidine 234, and glutamate 238 together coordinate Zn(2+). The 'KMSKS' region signature appears at 269–273; it reads KMSKS. Lysine 272 is a binding site for ATP.

This sequence belongs to the class-I aminoacyl-tRNA synthetase family. In terms of assembly, monomer. Requires Zn(2+) as cofactor.

Its subcellular location is the cytoplasm. The catalysed reaction is tRNA(Cys) + L-cysteine + ATP = L-cysteinyl-tRNA(Cys) + AMP + diphosphate. The polypeptide is Cysteine--tRNA ligase (Blochmanniella floridana).